Consider the following 578-residue polypeptide: GTP diphosphokinase CRSH3, chloroplastic (578 aa).

The transit peptide at M1 to G45 directs the protein to the chloroplast. In terms of domain architecture, HD spans S99–M199. EF-hand domains follow at residues A468–G503 and D506–K537. Ca(2+) is bound by residues D481, N483, D485, R487, E492, D515, N517, D519, S521, and E526.

Belongs to the RelA/SpoT family. As to expression, expressed in roots and shoots.

It is found in the plastid. The protein localises to the chloroplast. It carries out the reaction GTP + ATP = guanosine 3'-diphosphate 5'-triphosphate + AMP. With respect to regulation, activated by calcium. Its function is as follows. Possesses calcium-dependent ppGpp (guanosine 3'-diphosphate 5'-diphosphate) synthetase activity in vitro and is able to functionally complement E.coli relA mutants. May be involved in a rapid plant ppGpp-mediated response to pathogens and other stresses. The chain is GTP diphosphokinase CRSH3, chloroplastic from Oryza sativa subsp. japonica (Rice).